We begin with the raw amino-acid sequence, 423 residues long: Kynureninase (423 aa).

Residues L105, S106, 133–136, D218, H221, and Y243 contribute to the pyridoxal 5'-phosphate site; that span reads FPSD. Residue K244 is modified to N6-(pyridoxal phosphate)lysine. Residues W273 and N301 each contribute to the pyridoxal 5'-phosphate site.

Belongs to the kynureninase family. As to quaternary structure, homodimer. Requires pyridoxal 5'-phosphate as cofactor.

It catalyses the reaction L-kynurenine + H2O = anthranilate + L-alanine + H(+). The enzyme catalyses 3-hydroxy-L-kynurenine + H2O = 3-hydroxyanthranilate + L-alanine + H(+). It participates in amino-acid degradation; L-kynurenine degradation; L-alanine and anthranilate from L-kynurenine: step 1/1. Its pathway is cofactor biosynthesis; NAD(+) biosynthesis; quinolinate from L-kynurenine: step 2/3. Its function is as follows. Catalyzes the cleavage of L-kynurenine (L-Kyn) and L-3-hydroxykynurenine (L-3OHKyn) into anthranilic acid (AA) and 3-hydroxyanthranilic acid (3-OHAA), respectively. In Xanthomonas oryzae pv. oryzae (strain KACC10331 / KXO85), this protein is Kynureninase.